The sequence spans 274 residues: Formamidopyrimidine-DNA glycosylase (274 aa).

The active-site Schiff-base intermediate with DNA is the Pro-2. The active-site Proton donor is the Glu-3. Lys-60 acts as the Proton donor; for beta-elimination activity in catalysis. 2 residues coordinate DNA: His-93 and Arg-112. The FPG-type zinc finger occupies Asp-240–Lys-274. Arg-264 functions as the Proton donor; for delta-elimination activity in the catalytic mechanism.

This sequence belongs to the FPG family. In terms of assembly, monomer. The cofactor is Zn(2+).

It carries out the reaction Hydrolysis of DNA containing ring-opened 7-methylguanine residues, releasing 2,6-diamino-4-hydroxy-5-(N-methyl)formamidopyrimidine.. The catalysed reaction is 2'-deoxyribonucleotide-(2'-deoxyribose 5'-phosphate)-2'-deoxyribonucleotide-DNA = a 3'-end 2'-deoxyribonucleotide-(2,3-dehydro-2,3-deoxyribose 5'-phosphate)-DNA + a 5'-end 5'-phospho-2'-deoxyribonucleoside-DNA + H(+). In terms of biological role, involved in base excision repair of DNA damaged by oxidation or by mutagenic agents. Acts as a DNA glycosylase that recognizes and removes damaged bases. Has a preference for oxidized purines, such as 7,8-dihydro-8-oxoguanine (8-oxoG). Has AP (apurinic/apyrimidinic) lyase activity and introduces nicks in the DNA strand. Cleaves the DNA backbone by beta-delta elimination to generate a single-strand break at the site of the removed base with both 3'- and 5'-phosphates. The sequence is that of Formamidopyrimidine-DNA glycosylase (mutM) from Halalkalibacterium halodurans (strain ATCC BAA-125 / DSM 18197 / FERM 7344 / JCM 9153 / C-125) (Bacillus halodurans).